The chain runs to 556 residues: Phenylalanine--tRNA ligase beta subunit (556 aa).

Residues 269–345 enclose the B5 domain; the sequence is MEPEEVVYDV…MGYGYERIEP (77 aa). Mg(2+)-binding residues include Asp-323, Asp-329, Glu-332, and Glu-333.

This sequence belongs to the phenylalanyl-tRNA synthetase beta subunit family. Type 2 subfamily. As to quaternary structure, tetramer of two alpha and two beta subunits. Mg(2+) is required as a cofactor.

The protein resides in the cytoplasm. It carries out the reaction tRNA(Phe) + L-phenylalanine + ATP = L-phenylalanyl-tRNA(Phe) + AMP + diphosphate + H(+). The polypeptide is Phenylalanine--tRNA ligase beta subunit (Thermofilum pendens (strain DSM 2475 / Hrk 5)).